The sequence spans 397 residues: uncharacterized protein (397 aa).

10 consecutive transmembrane segments (helical) span residues 2 to 24 (LNLL…PGIH), 44 to 66 (YIPF…SAFL), 92 to 114 (AIVL…SLFL), 124 to 143 (AFYC…FILY), 150 to 169 (SVWE…AVLY), 173 to 195 (AFNI…INNL), 255 to 277 (FIVS…VIFI), 297 to 319 (INTA…LNLS), 331 to 350 (FKFL…IIGS), and 354 to 373 (YLIY…LLAV).

The protein localises to the cell membrane. This is an uncharacterized protein from Methanocaldococcus jannaschii (strain ATCC 43067 / DSM 2661 / JAL-1 / JCM 10045 / NBRC 100440) (Methanococcus jannaschii).